The primary structure comprises 425 residues: Pleckstrin homology domain-containing family A member 2 (425 aa).

A PH 1 domain is found at Q7–K113. Residue K141 forms a Glycyl lysine isopeptide (Lys-Gly) (interchain with G-Cter in SUMO2) linkage. Residue S184 is modified to Phosphoserine. Positions P198–Q298 constitute a PH 2 domain. S314 and S349 each carry phosphoserine. The interval A374–P410 is disordered. Basic and acidic residues predominate over residues R400–P410.

Binds MPDZ and PTPN13.

It is found in the cytoplasm. The protein resides in the cell membrane. It localises to the nucleus. Functionally, binds specifically to phosphatidylinositol 3,4-diphosphate (PtdIns3,4P2), but not to other phosphoinositides. May recruit other proteins to the plasma membrane. The chain is Pleckstrin homology domain-containing family A member 2 (PLEKHA2) from Bos taurus (Bovine).